Consider the following 759-residue polypeptide: NADP-dependent malic enzyme (759 aa).

Residues 1–428 (MDEQLKQSAL…KLTEFVYKTN (428 aa)) form a malic enzyme region. The Proton donor role is filled by Tyr39. Residue Lys94 is the Proton acceptor of the active site. Glu136, Asp137, and Asp162 together coordinate a divalent metal cation. NADP(+)-binding positions include 195–198 (AGAA), Asn288, and Asn320. The interval 429 to 759 (LFMKPIFSQA…AVVEAQTTPL (331 aa)) is phosphate acetyltransferase.

The protein in the N-terminal section; belongs to the malic enzymes family. It in the C-terminal section; belongs to the phosphate acetyltransferase and butyryltransferase family. The cofactor is Mg(2+). Requires Mn(2+) as cofactor.

It catalyses the reaction (S)-malate + NADP(+) = pyruvate + CO2 + NADPH. The catalysed reaction is oxaloacetate + H(+) = pyruvate + CO2. The chain is NADP-dependent malic enzyme (maeB) from Salmonella typhimurium (strain LT2 / SGSC1412 / ATCC 700720).